We begin with the raw amino-acid sequence, 74 residues long: uncharacterized protein (74 aa).

A helical membrane pass occupies residues 52–72; it reads ITFGFTVLGLGIGMIFGDAGL.

The protein resides in the membrane. This is an uncharacterized protein from Methanocaldococcus jannaschii (strain ATCC 43067 / DSM 2661 / JAL-1 / JCM 10045 / NBRC 100440) (Methanococcus jannaschii).